A 330-amino-acid chain; its full sequence is Small ribosomal subunit protein uS2 (330 aa).

The protein belongs to the universal ribosomal protein uS2 family.

The sequence is that of Small ribosomal subunit protein uS2 from Bradyrhizobium sp. (strain BTAi1 / ATCC BAA-1182).